The primary structure comprises 535 residues: Pyrichalasin C-18 hydroxylase (535 aa).

The helical transmembrane segment at 42–62 (LPSGTLIVLAALSLALLVAVL) threads the bilayer. Residues Asn139 and Asn222 are each glycosylated (N-linked (GlcNAc...) asparagine). Residue Cys479 coordinates heme.

This sequence belongs to the cytochrome P450 family. Heme serves as cofactor.

The protein localises to the membrane. Its pathway is mycotoxin biosynthesis. Functionally, cytochrome P450 monooxygenase; part of the gene cluster that mediates the biosynthesis of the mycotoxin pyrichalasin H, a tyrosine-derived cytochalasan that inhibits the growth of rice seedlings, but also inhibits lymphocyte capping and actin polymerization and alters cell morphology. Pyrichalasin H is indicated as the responsible agent for the genus-specific pathogenicity of M.grisea toward crabgrass. The first step in the pathway is catalyzed by the O-methyltransferase pyiA which methylates free tyrosine to generate the precursor O-methyltyrosine. The hybrid PKS-NRPS pyiS, assisted by the enoyl reductase pyiC, are responsible for fusion of the O-methyltyrosine precursor and the polyketide backbone. The polyketide synthase module (PKS) of pyiS is responsible for the synthesis of the polyketide backbone and the downstream nonribosomal peptide synthetase (NRPS) amidates the carboxyl end of the polyketide with the O-methyltyrosine precursor. As the NRPS A-domain demonstrates substrate tolerance, pyiS can also use phenylalanine, tyrosine and even para-chlorophenylalanine as amino acid precursor, which leads to the production of novel cytochalasans, including halogenated cytochalasans. Because pyiS lacks a designated enoylreductase (ER) domain, the required activity is provided the enoyl reductase pyiC. Reduction by the hydrolyase pyiE leads to 1,5-dihydropyrrolone, which is substrate for dehydration and intra-molecular Diels-Alder cyclization by the Diels-Alderase pyiF to yield the required isoindolone-fused macrocycle. The tailoring cytochrome P450 monooxygenases piyD and piyG catalyze the hydroxylation at C-18 and C-7, respectivily, whereas the short-chain dehydrogenase/reductase pyiH reduces the carbonyl at C-21 in preparation for the transfer of an acetyl group by the acetyltransferase pyiB. These 3 reactions whose order is not clear yet, lead to the production of O-methylpyrichalasin J, a deacetylated pyrichalasin H. Finally, pyiB to converts O-methylpyrichalasin J into the final product pyrichalasin H via acetylation of C-21. This Pyricularia grisea (Crabgrass-specific blast fungus) protein is Pyrichalasin C-18 hydroxylase.